Consider the following 679-residue polypeptide: FAST kinase domain-containing protein 2, mitochondrial (679 aa).

Residues Ser-113 and Ser-126 each carry the phosphoserine modification. Residues 607-664 enclose the RAP domain; sequence VAVLCVPKSAYCLNSNHLRGLMAMKIRHLNVMGFHVILIHNWELKKLKMEDAVTFVRK.

It belongs to the FAST kinase family. In terms of assembly, monomer. Found in a complex with GRSF1, DDX28, DHX30 and FASTKD5. Associates with the 16S mitochondrial rRNA (16S mt-rRNA). Forms a regulatory protein-RNA complex, consisting of RCC1L, NGRN, RPUSD3, RPUSD4, TRUB2, FASTKD2 and 16S mt-rRNA.

It is found in the mitochondrion matrix. It localises to the mitochondrion nucleoid. In terms of biological role, plays an important role in assembly of the mitochondrial large ribosomal subunit. As a component of a functional protein-RNA module, consisting of RCC1L, NGRN, RPUSD3, RPUSD4, TRUB2, FASTKD2 and 16S mitochondrial ribosomal RNA (16S mt-rRNA), controls 16S mt-rRNA abundance and is required for intra-mitochondrial translation. May play a role in mitochondrial apoptosis. The protein is FAST kinase domain-containing protein 2, mitochondrial (Fastkd2) of Rattus norvegicus (Rat).